The primary structure comprises 854 residues: V-type proton ATPase 116 kDa subunit a 2 (854 aa).

Topologically, residues 1–393 (MGSLFRSETM…DAYGVGSYQE (393 aa)) are cytoplasmic. Residues 394–412 (VNPALFTIITFPFLFAVMF) traverse the membrane as a helical segment. Over 413-414 (GD) the chain is Vacuolar. Residues 415–431 (FGHGFVMFLFALLLVLN) traverse the membrane as a helical segment. Residues 432–445 (ENHPRLNQSQEIMR) lie on the Cytoplasmic side of the membrane. A helical transmembrane segment spans residues 446-475 (MFFNGRYILLLMGLFSVYTGLIYNDCFSKS). At 476–549 (VNLFGSRWNV…ATNRLTFLNS (74 aa)) the chain is on the vacuolar side. A helical membrane pass occupies residues 550 to 569 (FKMKMSVILGITHMTFGVIL). Residues 570–587 (GIFNHLHFRKKFNICLVS) lie on the Cytoplasmic side of the membrane. Residues 588 to 608 (IPELLFMLCIFGYLIFMIIYK) traverse the membrane as a helical segment. The Vacuolar portion of the chain corresponds to 609–651 (WLVYSAETSRTAPSILIEFISMFLFLASDTGGLYPGQEHVQRL). Residues 652 to 671 (LLLITVLSVPVLFLGKPLFL) traverse the membrane as a helical segment. The Cytoplasmic segment spans residues 672–739 (LWLHRGRSCF…EILMTQIIHS (68 aa)). A phosphoserine mark is found at Ser-695 and Ser-700. Residues 740–764 (IEYCLGCISNTASYLRLWALSLAHA) form a helical membrane-spanning segment. Over 765–785 (QLSEVLWAMLMHVGLRVDTAY) the chain is Vacuolar. The chain crosses the membrane as a helical span at residues 786–824 (GVLVLLPVIAFFAVLTIFILLIMEGLSAFLHAIRLHWVE). Residues 825–854 (FQNKFYVGAGTKFVPFSFRLLSSKFSDDLA) lie on the Cytoplasmic side of the membrane.

The protein belongs to the V-ATPase 116 kDa subunit family. As to quaternary structure, V-ATPase is a heteromultimeric enzyme made up of two complexes: the ATP-hydrolytic V1 complex and the proton translocation V0 complex. The V1 complex consists of three catalytic AB heterodimers that form a heterohexamer, three peripheral stalks each consisting of EG heterodimers, one central rotor including subunits D and F, and the regulatory subunits C and H. The proton translocation complex V0 consists of the proton transport subunit a, a ring of proteolipid subunits c9c'', rotary subunit d, subunits e and f, and the accessory subunits ATP6AP1/Ac45 and ATP6AP2/PRR. Directly interacts with PSCD2 through its N-terminal cytosolic tail in an intra-endosomal acidification-dependent manner. Disruption of this interaction results in the inhibition of endocytosis. Interacts with SPAAR. As to expression, highly expressed in lung, kidney and spleen.

It is found in the cell membrane. The protein resides in the endosome membrane. Subunit of the V0 complex of vacuolar(H+)-ATPase (V-ATPase), a multisubunit enzyme composed of a peripheral complex (V1) that hydrolyzes ATP and a membrane integral complex (V0) that translocates protons. V-ATPase is responsible for acidifying and maintaining the pH of intracellular compartments and in some cell types, is targeted to the plasma membrane, where it is responsible for acidifying the extracellular environment. Essential component of the endosomal pH-sensing machinery. May play a role in maintaining the Golgi functions, such as glycosylation maturation, by controlling the Golgi pH. In aerobic conditions, involved in intracellular iron homeostasis, thus triggering the activity of Fe(2+) prolyl hydroxylase (PHD) enzymes, and leading to HIF1A hydroxylation and subsequent proteasomal degradation. This chain is V-type proton ATPase 116 kDa subunit a 2 (ATP6V0A2), found in Bos taurus (Bovine).